The sequence spans 140 residues: Probable glycine cleavage system H protein 3 (140 aa).

A Lipoyl-binding domain is found at 29–110 (VVSIGVTDLG…PYDSWIVKIR (82 aa)). Lys70 bears the N6-lipoyllysine mark.

Belongs to the GcvH family. In terms of assembly, the glycine cleavage system is composed of four proteins: P, T, L and H. It depends on (R)-lipoate as a cofactor.

The glycine cleavage system catalyzes the degradation of glycine. The H protein shuttles the methylamine group of glycine from the P protein to the T protein. The sequence is that of Probable glycine cleavage system H protein 3 from Saccharolobus solfataricus (strain ATCC 35092 / DSM 1617 / JCM 11322 / P2) (Sulfolobus solfataricus).